Reading from the N-terminus, the 292-residue chain is Elongation factor Ts (292 aa).

Positions 79–82 (TDFV) are involved in Mg(2+) ion dislocation from EF-Tu.

This sequence belongs to the EF-Ts family.

Its subcellular location is the cytoplasm. Its function is as follows. Associates with the EF-Tu.GDP complex and induces the exchange of GDP to GTP. It remains bound to the aminoacyl-tRNA.EF-Tu.GTP complex up to the GTP hydrolysis stage on the ribosome. The chain is Elongation factor Ts from Xanthomonas campestris pv. campestris (strain ATCC 33913 / DSM 3586 / NCPPB 528 / LMG 568 / P 25).